The following is a 264-amino-acid chain: S-adenosylmethionine decarboxylase proenzyme (264 aa).

S112 serves as the catalytic Schiff-base intermediate with substrate; via pyruvic acid. S112 carries the pyruvic acid (Ser); by autocatalysis modification. H117 serves as the catalytic Proton acceptor; for processing activity. The Proton donor; for catalytic activity role is filled by C140.

This sequence belongs to the prokaryotic AdoMetDC family. Type 2 subfamily. In terms of assembly, heterooctamer of four alpha and four beta chains arranged as a tetramer of alpha/beta heterodimers. Pyruvate serves as cofactor. Post-translationally, is synthesized initially as an inactive proenzyme. Formation of the active enzyme involves a self-maturation process in which the active site pyruvoyl group is generated from an internal serine residue via an autocatalytic post-translational modification. Two non-identical subunits are generated from the proenzyme in this reaction, and the pyruvate is formed at the N-terminus of the alpha chain, which is derived from the carboxyl end of the proenzyme. The post-translation cleavage follows an unusual pathway, termed non-hydrolytic serinolysis, in which the side chain hydroxyl group of the serine supplies its oxygen atom to form the C-terminus of the beta chain, while the remainder of the serine residue undergoes an oxidative deamination to produce ammonia and the pyruvoyl group blocking the N-terminus of the alpha chain.

The catalysed reaction is S-adenosyl-L-methionine + H(+) = S-adenosyl 3-(methylsulfanyl)propylamine + CO2. Its pathway is amine and polyamine biosynthesis; S-adenosylmethioninamine biosynthesis; S-adenosylmethioninamine from S-adenosyl-L-methionine: step 1/1. Catalyzes the decarboxylation of S-adenosylmethionine to S-adenosylmethioninamine (dcAdoMet), the propylamine donor required for the synthesis of the polyamines spermine and spermidine from the diamine putrescine. The sequence is that of S-adenosylmethionine decarboxylase proenzyme from Serratia proteamaculans (strain 568).